We begin with the raw amino-acid sequence, 328 residues long: NADH-quinone oxidoreductase subunit H (328 aa).

Helical transmembrane passes span 8–28 (VAAI…AVGA), 81–101 (GLFV…FMVI), 114–134 (IGLL…LFAG), 154–174 (LSYE…AGSF), 186–206 (LWFI…GIAV), 237–257 (FFVG…TLFL), 265–285 (LPPI…FILL), and 304–324 (VCLP…LIFS).

The protein belongs to the complex I subunit 1 family. As to quaternary structure, NDH-1 is composed of 14 different subunits. Subunits NuoA, H, J, K, L, M, N constitute the membrane sector of the complex.

Its subcellular location is the cell inner membrane. It catalyses the reaction a quinone + NADH + 5 H(+)(in) = a quinol + NAD(+) + 4 H(+)(out). NDH-1 shuttles electrons from NADH, via FMN and iron-sulfur (Fe-S) centers, to quinones in the respiratory chain. The immediate electron acceptor for the enzyme in this species is believed to be ubiquinone. Couples the redox reaction to proton translocation (for every two electrons transferred, four hydrogen ions are translocated across the cytoplasmic membrane), and thus conserves the redox energy in a proton gradient. This subunit may bind ubiquinone. This is NADH-quinone oxidoreductase subunit H from Chromohalobacter salexigens (strain ATCC BAA-138 / DSM 3043 / CIP 106854 / NCIMB 13768 / 1H11).